The following is a 104-amino-acid chain: Large ribosomal subunit protein uL24 (104 aa).

This sequence belongs to the universal ribosomal protein uL24 family. Part of the 50S ribosomal subunit.

In terms of biological role, one of two assembly initiator proteins, it binds directly to the 5'-end of the 23S rRNA, where it nucleates assembly of the 50S subunit. Functionally, one of the proteins that surrounds the polypeptide exit tunnel on the outside of the subunit. This chain is Large ribosomal subunit protein uL24, found in Afipia carboxidovorans (strain ATCC 49405 / DSM 1227 / KCTC 32145 / OM5) (Oligotropha carboxidovorans).